A 156-amino-acid polypeptide reads, in one-letter code: Ribosomal RNA large subunit methyltransferase H (156 aa).

Residues Leu-72, Gly-104, and Phe-123–Trp-128 each bind S-adenosyl-L-methionine.

It belongs to the RNA methyltransferase RlmH family. Homodimer.

It is found in the cytoplasm. It catalyses the reaction pseudouridine(1915) in 23S rRNA + S-adenosyl-L-methionine = N(3)-methylpseudouridine(1915) in 23S rRNA + S-adenosyl-L-homocysteine + H(+). Functionally, specifically methylates the pseudouridine at position 1915 (m3Psi1915) in 23S rRNA. The sequence is that of Ribosomal RNA large subunit methyltransferase H from Dinoroseobacter shibae (strain DSM 16493 / NCIMB 14021 / DFL 12).